The following is a 607-amino-acid chain: MPYELKKVFASLPQMERGVAKILAGDPKGNNFLYTNGKSVIIRNIDNPAIADIYTEHAHQAVVARYAPSGFYIASGDTSGKLRIWDTTQKEHLLKYEYQPFAGKIKDIAWTEDSKRIAVVGEGREKFASVFLWDTGSSVGEITGNIKVINSVDIKQTRPYRLVTGSDDNCCAFLEGPPFKFKFTMSDHSRFVNCVRFSPDGSKLASAGADGQIFLYDGKTGEKVCSLGGSKAHDGGIYAVSWSPDGTQLLSASGDKTTKIWDVAANSAVTTFNLGSDVLDQQLGCLWQKDYLLSVSLSGYINYLDKNNPARPLRVIKGHNKSIQCMTVNNSDGRSTIYTGSHDGHINYWDAETGENDTFTGKGHTNQVSSMDLDGCNQLITCSMDDTLRYTSLISKDYSSSESVKMDVQPKCVAVGSGGYVVTVCIGQIVLLKDKKKVFAIDSLDYEPEAVAIHKGSGTVAVGGADGKVHLYSIQGNSLKDEGKTLPAKGAVTDLAYSHDGAFLAVTDANKVVTVFSVADGYSEKNSYYGHHAKALSVAWSPDNEHFASSGMDMMVYVWTLSDPDTRIKMPDAHRLHHVSSLAWLDEHTLATVSHDACVKQWTVTFK.

13 WD repeats span residues 4 to 45 (ELKK…IRNI), 48 to 87 (PAIA…IWDT), 93 to 135 (LLKY…LWDT), 138 to 176 (SVGE…FLEG), 180 to 218 (KFKF…LYDG), 224 to 263 (VCSL…IWDV), 270 to 306 (TTFN…YLDK), 311 to 351 (RPLR…YWDA), 358 to 408 (TFTG…KMDV), 432 to 474 (LKDK…LYSI), 480 to 518 (KDEG…VFSV), 523 to 561 (SEKN…VWTL), and 566 to 604 (TRIK…QWTV).

This sequence belongs to the WD repeat AIP1 family.

Its subcellular location is the cell membrane. The protein resides in the cytoplasm. It is found in the cytoskeleton. It localises to the nucleus. In terms of biological role, induces disassembly of actin filaments in conjunction with ADF/cofilin family proteins. Doesn't sever actin filaments alone, but caps the barbed ends of filaments severed by cofilin, which blocks annealing and depolymerization and allows more extensive severing by cofilin. In Xenopus laevis (African clawed frog), this protein is WD repeat-containing protein 1-A (wdr1-a).